Here is a 196-residue protein sequence, read N- to C-terminus: V-type proton ATPase subunit E (196 aa).

The protein belongs to the V-ATPase E subunit family.

Its function is as follows. Produces ATP from ADP in the presence of a proton gradient across the membrane. This chain is V-type proton ATPase subunit E, found in Clostridium botulinum (strain Alaska E43 / Type E3).